An 827-amino-acid polypeptide reads, in one-letter code: Probable inorganic carbon transporter subunit DabA2 (827 aa).

Zn(2+) contacts are provided by Cys351, Asp353, His524, and Cys539.

The protein belongs to the inorganic carbon transporter (TC 9.A.2) DabA family. As to quaternary structure, forms a complex with DabB2, possibly a heterodimer. The cofactor is Zn(2+).

It localises to the cell inner membrane. Its activity is regulated as follows. Uptake of inorganic carbon by cells in the presence of thiosulphate is fully inhibited by the uncouplers carbonyl cyanide m-chlorophenyl hydrazone (CCCP), carbonyl cyanide p-trifluoromethoxyphenyl hydrazone (FCCP), S13 or SF6847. Not inhibited by the ATPase inhibitor N,N-dicyclohexylcarbodiimide (DCCD). Inorganic carbon uptake is inhibited by the ionophore CCCP, suggesting uptake is coupled to a cation gradient. Functionally, part of an energy-coupled inorganic carbon pump; its substrate may be carbon dioxide. Expression of both dabA2 and dabB2 (DAB2) restores growth in ambient air to E.coli deleted of its carbonic anhydrase genes (called CAfree, deletion of 'can' and 'cynT'); neither dabA2 or dabB2 alone is sufficient. Rescue is pH-independent, suggesting it transports CO(2) and not carbonate ions. Together the genes allow greater than normal uptake of inorganic carbon by E.coli. Uptake of carbon dioxide rather than bicarbonate has been suggested based on kinetic calculations. This Halothiobacillus neapolitanus (strain ATCC 23641 / c2) (Thiobacillus neapolitanus) protein is Probable inorganic carbon transporter subunit DabA2.